The sequence spans 252 residues: 3-dehydroquinate dehydratase (252 aa).

Residues 46–48 (EWR) and arginine 82 contribute to the 3-dehydroquinate site. Catalysis depends on histidine 143, which acts as the Proton donor/acceptor. Residue lysine 170 is the Schiff-base intermediate with substrate of the active site. Residues arginine 212, serine 231, and glutamine 235 each coordinate 3-dehydroquinate.

It belongs to the type-I 3-dehydroquinase family. Homodimer.

It catalyses the reaction 3-dehydroquinate = 3-dehydroshikimate + H2O. The protein operates within metabolic intermediate biosynthesis; chorismate biosynthesis; chorismate from D-erythrose 4-phosphate and phosphoenolpyruvate: step 3/7. Its function is as follows. Involved in the third step of the chorismate pathway, which leads to the biosynthesis of aromatic amino acids. Catalyzes the cis-dehydration of 3-dehydroquinate (DHQ) and introduces the first double bond of the aromatic ring to yield 3-dehydroshikimate. The protein is 3-dehydroquinate dehydratase of Listeria monocytogenes serotype 4a (strain HCC23).